The sequence spans 206 residues: MELNVINTQGKAVGSLQVSDALFGREYNEALVHQVVTAFLANARSGNRAQLTRAEVKHSTKKPFRQKGTGNARAGMTSTPNRRGGGRAFPNKPDENFTQKVNRKMYRAGIATILSQLVRDERLIVVDDLSVASPKTKEFVGAVQPMGLEQALFITNELSENLYLSSRNLPNMLVIEAVQADPYSLLRFKKTVITRDAVKQLEEQWA.

The segment at 51-96 (LTRAEVKHSTKKPFRQKGTGNARAGMTSTPNRRGGGRAFPNKPDEN) is disordered.

The protein belongs to the universal ribosomal protein uL4 family. Part of the 50S ribosomal subunit.

Its function is as follows. One of the primary rRNA binding proteins, this protein initially binds near the 5'-end of the 23S rRNA. It is important during the early stages of 50S assembly. It makes multiple contacts with different domains of the 23S rRNA in the assembled 50S subunit and ribosome. In terms of biological role, forms part of the polypeptide exit tunnel. The polypeptide is Large ribosomal subunit protein uL4 (Chromobacterium violaceum (strain ATCC 12472 / DSM 30191 / JCM 1249 / CCUG 213 / NBRC 12614 / NCIMB 9131 / NCTC 9757 / MK)).